We begin with the raw amino-acid sequence, 400 residues long: Probable peptidoglycan D,D-transpeptidase PenA (400 aa).

Residues 1–21 form a disordered region; it reads NIDGKGQEGLELSREDSLRGE. The Acyl-ester intermediate role is filled by serine 128.

Belongs to the transpeptidase family. FtsI subfamily.

The protein localises to the cell inner membrane. It carries out the reaction Preferential cleavage: (Ac)2-L-Lys-D-Ala-|-D-Ala. Also transpeptidation of peptidyl-alanyl moieties that are N-acyl substituents of D-alanine.. The protein operates within cell wall biogenesis; peptidoglycan biosynthesis. In terms of biological role, catalyzes cross-linking of the peptidoglycan cell wall at the division septum. The sequence is that of Probable peptidoglycan D,D-transpeptidase PenA from Neisseria flavescens.